The following is a 155-amino-acid chain: Leader peptidase HopD (155 aa).

Belongs to the peptidase A24 family.

This is Leader peptidase HopD (hopD) from Escherichia coli.